The sequence spans 186 residues: Peptidyl-tRNA hydrolase (186 aa).

Tyr14 contributes to the tRNA binding site. His19 acts as the Proton acceptor in catalysis. Tyr64, Asn66, and Asn112 together coordinate tRNA.

The protein belongs to the PTH family. In terms of assembly, monomer.

It localises to the cytoplasm. It carries out the reaction an N-acyl-L-alpha-aminoacyl-tRNA + H2O = an N-acyl-L-amino acid + a tRNA + H(+). Its function is as follows. Hydrolyzes ribosome-free peptidyl-tRNAs (with 1 or more amino acids incorporated), which drop off the ribosome during protein synthesis, or as a result of ribosome stalling. In terms of biological role, catalyzes the release of premature peptidyl moieties from peptidyl-tRNA molecules trapped in stalled 50S ribosomal subunits, and thus maintains levels of free tRNAs and 50S ribosomes. The chain is Peptidyl-tRNA hydrolase from Lachnospira eligens (strain ATCC 27750 / DSM 3376 / VPI C15-48 / C15-B4) (Eubacterium eligens).